Here is a 445-residue protein sequence, read N- to C-terminus: MSRRKAGRVPRRVDPDTDTDIEMPDLVMDVKPDLDLRSLAQGPWIARDMPISDVKRQLQTASRPLGAPSTCAPRMPLSSKSSDRQPWTDKHPDLLTCGRCGKIFPLGAIIAFMDHKKQGCQLLQVSDPISESKELKALSCLQCGRQYTSPWKLLCHAQWDHGLCIYQTQHLDTPEAPLLGLAEVAAAMSAVAVVAPVESKPPPVSSAARRSPTCDVCKKTLSSFSNLKVHMRSHTGERPYSCDQCSYACAQSSKLNRHKKTHRQLAPGSPSTSASSRGVSPAAPPEPAAYAAAPASTLPSQTVEKAGAAATAGVQEPGAPGSGAQGGPGFVGWGAPAKVERTDPVKIEKTAPRKSHGPGGKCEFCGKSFTNSSNLTVHRRSHTGERPYTCDQCPYACAQSSKLNRHRRTHGLGTGKTVKCPHCLVPFGLQATLDKHLRQKHPEMA.

The span at 1 to 10 (MSRRKAGRVP) shows a compositional bias: basic residues. The interval 1–20 (MSRRKAGRVPRRVDPDTDTD) is disordered. Lys31 participates in a covalent cross-link: Glycyl lysine isopeptide (Lys-Gly) (interchain with G-Cter in SUMO2). The tract at residues 62 to 88 (SRPLGAPSTCAPRMPLSSKSSDRQPWT) is disordered. 3 consecutive C2H2-type zinc fingers follow at residues 138–161 (LSCL…QWDH), 212–234 (PTCD…MRSH), and 240–262 (YSCD…KKTH). Residues 256-359 (NRHKKTHRQL…TAPRKSHGPG (104 aa)) are disordered. A compositionally biased stretch (polar residues) spans 269-278 (SPSTSASSRG). Residues 320–332 (PGSGAQGGPGFVG) show a composition bias toward gly residues. A compositionally biased stretch (basic and acidic residues) spans 338 to 351 (KVERTDPVKIEKTA). 3 consecutive C2H2-type zinc fingers follow at residues 360–382 (GKCE…RRSH), 388–410 (YTCD…RRTH), and 418–441 (VKCP…RQKH).

Belongs to the krueppel C2H2-type zinc-finger protein family. As to quaternary structure, interacts with KLF4. As to expression, strongly expressed in testis and embryonic stem cells.

The protein resides in the nucleus. May be a transcriptional corepressor with KLF4. This Mus musculus (Mouse) protein is Zinc finger protein 296.